Consider the following 561-residue polypeptide: Potassium-transporting ATPase potassium-binding subunit (561 aa).

12 helical membrane-spanning segments follow: residues 5-25 (LAAGLQVVFVLAVLAVAYVPV), 60-80 (YGYAGSVLGFSAASVLFLYAL), 86-106 (VLPLSGDLSGVSPAVAFNTAV), 131-151 (GLAVQNFVSAAVGMAVAVALI), 177-197 (ILLPFSFVIALILLSQGVIQS), 247-267 (PTPVSNIVEILAILLIPVSLT), 281-301 (LTLLAVMGILWGSLLAVTLAA), 324-344 (FGIPGTALFAVSTTGTSTGAV), 376-396 (GLYGILVLALIAVFVGGLLVG), 415-435 (ALSVLVMPALVLIGTGITVIL), 488-508 (ALGLCMLFGRFLPIIFVLALA), and 537-557 (GTVVLVAALTFFPALALGPIA).

The protein belongs to the KdpA family. The system is composed of three essential subunits: KdpA, KdpB and KdpC.

The protein resides in the cell membrane. Part of the high-affinity ATP-driven potassium transport (or Kdp) system, which catalyzes the hydrolysis of ATP coupled with the electrogenic transport of potassium into the cytoplasm. This subunit binds the extracellular potassium ions and delivers the ions to the membrane domain of KdpB through an intramembrane tunnel. The polypeptide is Potassium-transporting ATPase potassium-binding subunit (Rhodococcus opacus (strain B4)).